The primary structure comprises 2140 residues: Dedicator of cytokinesis protein 7 (2140 aa).

Ser30, Ser180, and Ser182 each carry phosphoserine. The disordered stretch occupies residues 138–183 (FNPNTLDKQKERQKGLPKQVFESDEAPDGNSYQDDQDDLKRRSMSI). Residues 365-395 (FKEADATKNKEKLEKLKSQADQFCQRLGKYR) are a coiled coil. Position 381 is an N6-methyllysine (Lys381). A Phosphothreonine modification is found at Thr450. The residue at position 452 (Ser452) is a Phosphoserine. The 167-residue stretch at 561-727 (RNLLYIYPQS…GVFNVEVVAV (167 aa)) folds into the C2 DOCK-type domain. Phosphoserine is present on residues Ser862, Ser864, Ser882, Ser888, Ser896, Ser900, and Ser905. Residues 888 to 901 (SLNLNRSRSLSNSN) show a composition bias toward low complexity. The disordered stretch occupies residues 888–971 (SLNLNRSRSL…MSSHTETSSF (84 aa)). Phosphothreonine occurs at positions 907 and 909. Ser910, Ser929, Ser964, Ser1383, Lys1390, Ala1394, Glu1398, Tyr1421, Ser1425, Arg1429, Ser1430, Ser1432, Ser1434, and Ser1438 each carry phosphoserine. Positions 943–971 (SNPSPSAESTQAMDRSCNRMSSHTETSSF) are enriched in polar residues. A DOCKER domain is found at 1678–2114 (KGYQTSPDLR…LQPLINRKIP (437 aa)). Lys1962 is subject to N6-acetyllysine. Positions 2086–2112 (DQKEYQRELERNYHRLKEALQPLINRK) form a coiled coil. Ser2129 is modified (phosphoserine).

This sequence belongs to the DOCK family. Component of the DOCK7-induced septin displacement/DISP complex, at least composed of DOCK7, LRCH3 and MYO6. Interacts with TSC1. Interacts with nucleotide-free RAC1 and RAC3. Interacts with TACC3 and CRY1. Interacts with NOD2. Widely expressed.

Its subcellular location is the cell projection. It is found in the axon. Functions as a guanine nucleotide exchange factor (GEF), which activates Rac1 and Rac3 Rho small GTPases by exchanging bound GDP for free GTP. Does not have a GEF activity for CDC42. Required for STMN1 'Ser-15' phosphorylation during axon formation and consequently for neuronal polarization. As part of the DISP complex, may regulate the association of septins with actin and thereby regulate the actin cytoskeleton. Has a role in pigmentation. Involved in the regulation of cortical neurogenesis through the control of radial glial cells (RGCs) proliferation versus differentiation; negatively regulates the basal-to-apical interkinetic nuclear migration of RGCs by antagonizing the microtubule growth-promoting function of TACC3. The chain is Dedicator of cytokinesis protein 7 (DOCK7) from Homo sapiens (Human).